Consider the following 181-residue polypeptide: Regulator of G-protein signaling 5 (181 aa).

Residues 64-180 (SLDKLLQNSY…VRSEFYKELI (117 aa)) enclose the RGS domain.

Expressed in heart and muscle.

It is found in the cytoplasm. The protein localises to the membrane. Inhibits signal transduction by increasing the GTPase activity of G protein alpha subunits thereby driving them into their inactive GDP-bound form. Binds to G(i)-alpha and G(o)-alpha, but not to G(s)-alpha. This chain is Regulator of G-protein signaling 5 (Rgs5), found in Mus musculus (Mouse).